The following is a 442-amino-acid chain: Protein bag of marbles (442 aa).

The interval 201–250 (FDMPVKSTMPKSLNVRYQLQVLCTKVERFLVQQRRTLEANRHFDFEKYDE) is required for interaction with ubiquitin. Positions 408–442 (VSMEQPSASEEEFEETEEVPSSPPRHTGRVPRFRS) are disordered. Residues 416–425 (SEEEFEETEE) are compositionally biased toward acidic residues. Basic residues predominate over residues 433-442 (HTGRVPRFRS).

Interacts (via central region) with ubiquitin. Interacts (via C-terminus) with otu (via OTU domain); the interaction enhances otu aggregation into amyloid-like structures and enhances its deubiquitinase activity. Together with otu interacts with CycA/cyclin-A (via C-terminus); the interaction stabilizes CycA by promoting and enhancing otu dependent deubiquitination of CycA. Together with otu interacts with Traf6. Part of a complex composed of at least tut, bam and bgcn; complex formation does not require RNA. Interacts (via C-terminus) with bgcn; the interaction is direct and is not disrupted by eIF4A. Interacts with eIF4A (via multiple contacts); the interaction is direct and is not disrupted by bgcn. Interacts (via N-terminus) with tut; the interaction is direct and mediates the interaction between tut and bgcn. As part of the bam-bgcn-tut complex associates with twin; may recruit the CCR4-NOT1 deadenylation complex to mRNA 3'-UTRs to mediate post-transcriptional regulation of expression. Part of a complex composed of at least mei-P26, bam, bgcn and Sxl; this complex is involved in translational repression of nanos mRNA. In terms of processing, ubiquitinated (C-terminal region). As to expression, in cystoblasts and/or very early cystocytes in testis (at protein level); expression levels are regulated by mei-P26. In cystoblasts and/or very early cystocytes in ovary. Expressed in the gut; expression levels increase with age.

It is found in the cytoplasm. Functionally, regulatory component of a deubiquitinase complex consisting of bam and otu. The complex deubiquitinates K63-linked polyubiquitinated proteins, antagonizing the ubiquitination activity of Traf6 and regulating the IMD immune signaling pathway. Otu-bam deubiquitinase activity is regulated by Traf6 dependent immune signaling regulation of bam expression levels; this forms a feedback loop that regulates the IMD immune signaling pathway and balances gut immune activity during aging. The complex deubiquitinates and stabilizes CycA/cyclin-A to regulate CycA-dependent differentiation. Required to initiate both male and female gametogenesis. Part of a complex with bgcn involved in 3'-UTR-dependent translational repression of a subset of mRNAs, including those for mei-P26, nanos and shg/E-cadherin. Repression of mei-P26 is targeted by let-7 miRNA. Involved in a regulatory cascade with mei-P26 to control the progression of cystocytes through transit amplification and the switch to spermatocyte differentiation; mei-P26 facilitates bam accumulation, which in turn represses translation of mei-P26. Forms a complex with tut and bgcn involved in 3'-UTR-dependent post-transcriptional repression of several 3'-RNA processing factors, which promotes germline stem cell lineage differentiation and mitosis-to-meiosis transition. This is Protein bag of marbles from Drosophila melanogaster (Fruit fly).